The sequence spans 93 residues: Acylphosphatase (93 aa).

In terms of domain architecture, Acylphosphatase-like spans 5 to 93 (TAILRVTGFV…EERKTFDIVY (89 aa)). Active-site residues include Arg-20 and Asn-38.

This sequence belongs to the acylphosphatase family.

It catalyses the reaction an acyl phosphate + H2O = a carboxylate + phosphate + H(+). In Listeria monocytogenes serotype 4b (strain F2365), this protein is Acylphosphatase (acyP).